Here is a 307-residue protein sequence, read N- to C-terminus: MDSAAQSNQAQSVFGQTGTARVKRGMAEMLKGGVIMDVVIPEQARIAEGSGAVAVMALERVPSDIRAQGGVSRMSDPDMIESIIAAVTIPVMAKARIGHFVEAQILQSLGVDYIDESEVLTPADYTHHIDKWKFTVPFVCGATNLGEALRRINEGAAMIRSKGEAGTGDVSNATTHMRAIAGDIRRLTSLSEDELYVAAKELHAPYELVIEVARTNKLPVTLFTAGGIATPADAAMMMQLGAEGIFVGSGIFKSSDPAQRAAAIVKATTFYDDPDVLAKVSRGLGEAMAGIDVEQIAQPDRLAQRGW.

D37 is a D-ribose 5-phosphate binding site. The active-site Schiff-base intermediate with D-ribose 5-phosphate is the K94. Residue G166 coordinates D-ribose 5-phosphate. R178 is a binding site for D-glyceraldehyde 3-phosphate. D-ribose 5-phosphate contacts are provided by residues G227 and G248 to S249.

The protein belongs to the PdxS/SNZ family. In the presence of PdxT, forms a dodecamer of heterodimers.

The enzyme catalyses aldehydo-D-ribose 5-phosphate + D-glyceraldehyde 3-phosphate + L-glutamine = pyridoxal 5'-phosphate + L-glutamate + phosphate + 3 H2O + H(+). Its pathway is cofactor biosynthesis; pyridoxal 5'-phosphate biosynthesis. Its function is as follows. Catalyzes the formation of pyridoxal 5'-phosphate from ribose 5-phosphate (RBP), glyceraldehyde 3-phosphate (G3P) and ammonia. The ammonia is provided by the PdxT subunit. Can also use ribulose 5-phosphate and dihydroxyacetone phosphate as substrates, resulting from enzyme-catalyzed isomerization of RBP and G3P, respectively. The sequence is that of Pyridoxal 5'-phosphate synthase subunit PdxS from Mycobacterium leprae (strain Br4923).